The sequence spans 322 residues: Ribosomal RNA small subunit methyltransferase H (322 aa).

Residues 43–45, Asp-60, Phe-86, Asp-104, and Gln-111 contribute to the S-adenosyl-L-methionine site; that span reads GGY.

The protein belongs to the methyltransferase superfamily. RsmH family.

Its subcellular location is the cytoplasm. It carries out the reaction cytidine(1402) in 16S rRNA + S-adenosyl-L-methionine = N(4)-methylcytidine(1402) in 16S rRNA + S-adenosyl-L-homocysteine + H(+). In terms of biological role, specifically methylates the N4 position of cytidine in position 1402 (C1402) of 16S rRNA. This is Ribosomal RNA small subunit methyltransferase H from Caulobacter sp. (strain K31).